The following is a 424-amino-acid chain: UPF0761 membrane protein Smal_0716 (424 aa).

Transmembrane regions (helical) follow at residues 48-68 (VFALVPLAIVVFGVLSAFPVF), 101-121 (SAGQLTAAGFIALVVSLLITL), 144-164 (FLVYWTVLTLGAMLAAASLAV), 181-201 (WLADLALRLAPILIEFVCITL), 216-236 (AVPGAILAAVILELVKWGIGA), and 251-271 (VAFVPILLLWIYLCWVAVLLG).

The protein belongs to the UPF0761 family.

The protein localises to the cell inner membrane. This Stenotrophomonas maltophilia (strain R551-3) protein is UPF0761 membrane protein Smal_0716.